The primary structure comprises 730 residues: Protein groucho (730 aa).

The segment at 144–411 is disordered; the sequence is QVPGGPPQPM…GKPAYSFHMN (268 aa). The span at 198–233 shows a compositional bias: basic and acidic residues; that stretch reads AEERLRNSVSPADREKYRTRSPLDIENDSKRRKDEK. 3 positions are modified to phosphoserine: serine 205, serine 207, and serine 218. A CCN domain region spans residues 206–267; that stretch reads VSPADREKYR…SPRPNGEHVS (62 aa). A Nuclear localization signal motif is present at residues 227–230; that stretch reads KRRK. A Phosphoserine; by CK2 modification is found at serine 242. The span at 254–283 shows a compositional bias: basic and acidic residues; the sequence is MESHSPRPNGEHVSMEVRDRESLNGERLEK. Position 258 is a phosphoserine; by CDC2 (serine 258). Residues 262–425 form a binding to basic helix-loop-helix domain region; that stretch reads NGEHVSMEVR…LQPVPFPPDA (164 aa). Serine 267 is modified (phosphoserine). 3 stretches are compositionally biased toward low complexity: residues 296 to 308, 322 to 345, and 353 to 362; these read SRSG…STPS, AKAR…QMMP, and YPGAPYQRPA. Phosphothreonine occurs at positions 326 and 328. Over residues 366-382 the composition is skewed to pro residues; the sequence is QRPPSDPAYGRPPPMPY. WD repeat units follow at residues 442-480, 488-527, 532-571, 574-613, 615-654, 656-695, and 697-730; these read SHGE…NKNP, QRDN…PRIK, SAAP…LVRQ, GHTD…QLQQ, DFSS…KYQL, LHES…SIFQ, and KETS…EVIY.

This sequence belongs to the WD repeat Groucho/TLE family. As to quaternary structure, forms a complex with the hairy/Enhancer of split/deadpan family of basic helix-loop-helix proteins in order to repress transcription. Its activity in regulating transcription depends on other proteins as it lacks a DNA-binding motif. Interacts with hairy/hry (via WRPW motif). Post-translationally, ubiquitinated by XIAP/BIRC4. Ubiquitinated by hyd in response to Wnt signaling, leading to degradation by the proteasome.

It is found in the nucleus. Its function is as follows. Transcriptional corepressor that regulates transcription when recruited to specific target DNA by hairy-related bHLH proteins. Maternally required for neurogenesis; in the segregation of the neuroectoderm. Directly or indirectly interacts with Notch and Delta. The polypeptide is Protein groucho (gro) (Drosophila melanogaster (Fruit fly)).